Here is a 449-residue protein sequence, read N- to C-terminus: Biotin carboxylase (449 aa).

Positions 1-445 (MLEKVLIANR…NIHYLEKKLG (445 aa)) constitute a Biotin carboxylation domain. Residues Lys-116, Lys-159, 165–166 (GG), 201–204 (EKFL), His-209, and His-236 each bind ATP. The 198-residue stretch at 120–317 (KDAMKRAGVP…IVKEMLRIAS (198 aa)) folds into the ATP-grasp domain. A hydrogencarbonate-binding site is contributed by Lys-238. 2 residues coordinate ATP: Glu-276 and Glu-288. Residues Glu-276, Glu-288, and Asn-290 each contribute to the Mg(2+) site. Mn(2+) is bound by residues Glu-276, Glu-288, and Asn-290. Residues Arg-292, Val-295, and Arg-338 each coordinate hydrogencarbonate. Residue Arg-292 is part of the active site. Arg-338 lines the biotin pocket.

In terms of assembly, acetyl-CoA carboxylase is a heterohexamer of biotin carboxyl carrier protein, biotin carboxylase and the two subunits of carboxyl transferase in a 2:2 complex. Requires Mg(2+) as cofactor. The cofactor is Mn(2+).

It catalyses the reaction N(6)-biotinyl-L-lysyl-[protein] + hydrogencarbonate + ATP = N(6)-carboxybiotinyl-L-lysyl-[protein] + ADP + phosphate + H(+). The protein operates within lipid metabolism; malonyl-CoA biosynthesis; malonyl-CoA from acetyl-CoA: step 1/1. Functionally, this protein is a component of the acetyl coenzyme A carboxylase complex; first, biotin carboxylase catalyzes the carboxylation of the carrier protein and then the transcarboxylase transfers the carboxyl group to form malonyl-CoA. The protein is Biotin carboxylase (accC) of Pseudomonas aeruginosa (strain ATCC 15692 / DSM 22644 / CIP 104116 / JCM 14847 / LMG 12228 / 1C / PRS 101 / PAO1).